The sequence spans 545 residues: Eukaryotic translation initiation factor 3 subunit D-2 (545 aa).

The segment at F94–G148 is disordered. A compositionally biased stretch (basic residues) spans Q95–T113. Gly residues predominate over residues G114–P127. Basic and acidic residues predominate over residues E133–R145. The segment at Q287–P301 is RNA gate.

It belongs to the eIF-3 subunit D family. As to quaternary structure, component of the eukaryotic translation initiation factor 3 (eIF-3) complex. The eIF-3 complex interacts with pix.

The protein resides in the cytoplasm. Functionally, mRNA cap-binding component of the eukaryotic translation initiation factor 3 (eIF-3) complex, which is involved in protein synthesis of a specialized repertoire of mRNAs and, together with other initiation factors, stimulates binding of mRNA and methionyl-tRNAi to the 40S ribosome. The eIF-3 complex specifically targets and initiates translation of a subset of mRNAs involved in cell proliferation. In the eIF-3 complex, eif3d specifically recognizes and binds the 7-methylguanosine cap of a subset of mRNAs. This is Eukaryotic translation initiation factor 3 subunit D-2 from Drosophila pseudoobscura pseudoobscura (Fruit fly).